Consider the following 720-residue polypeptide: Polyribonucleotide nucleotidyltransferase (720 aa).

2 residues coordinate Mg(2+): aspartate 484 and aspartate 490. The KH domain maps to 551 to 610; that stretch reads PRMYKISIDPSKIGSVIGSGGKTIRSIIEQTNTTVDIENDGTVVIGATDEASAQKAIKII. The S1 motif domain maps to 620–688; the sequence is GSVYTGKVTR…SQGRINLSRR (69 aa). The interval 697–720 is disordered; the sequence is PISRNRDSQPRRSGPFRPQDRSNS.

The protein belongs to the polyribonucleotide nucleotidyltransferase family. The cofactor is Mg(2+).

The protein localises to the cytoplasm. The enzyme catalyses RNA(n+1) + phosphate = RNA(n) + a ribonucleoside 5'-diphosphate. Its function is as follows. Involved in mRNA degradation. Catalyzes the phosphorolysis of single-stranded polyribonucleotides processively in the 3'- to 5'-direction. This chain is Polyribonucleotide nucleotidyltransferase, found in Dehalococcoides mccartyi (strain ATCC BAA-2266 / KCTC 15142 / 195) (Dehalococcoides ethenogenes (strain 195)).